The following is a 190-amino-acid chain: MPPRPRFDRRAPVRELPNINERIKYPQLRVVDSDGKQLGVIDRIKALEIAHQRGLDLVLVSEKANPPVCRIMDYGKYKFEQEKKAKETKKKSHQTEVKEVKMRYKIDKHDYDVRIGQAVRFLKSGDKVKCTVFFRGREIQHSNLAETLLLKMANDLEEQSEVQQRPKREGRNMIMFLSPRKTPLIKKEEG.

It belongs to the IF-3 family. As to quaternary structure, monomer.

It localises to the cytoplasm. In terms of biological role, IF-3 binds to the 30S ribosomal subunit and shifts the equilibrium between 70S ribosomes and their 50S and 30S subunits in favor of the free subunits, thus enhancing the availability of 30S subunits on which protein synthesis initiation begins. This chain is Translation initiation factor IF-3, found in Prochlorococcus marinus subsp. pastoris (strain CCMP1986 / NIES-2087 / MED4).